Here is a 228-residue protein sequence, read N- to C-terminus: 3-dehydroquinate dehydratase (228 aa).

3-dehydroquinate-binding positions include Ser26, 51 to 53 (EIR), and Arg84. His127 acts as the Proton donor/acceptor in catalysis. The active-site Schiff-base intermediate with substrate is the Lys150. Residues Arg190, Thr209, and Gln213 each contribute to the 3-dehydroquinate site.

It belongs to the type-I 3-dehydroquinase family. Homodimer.

The catalysed reaction is 3-dehydroquinate = 3-dehydroshikimate + H2O. The protein operates within metabolic intermediate biosynthesis; chorismate biosynthesis; chorismate from D-erythrose 4-phosphate and phosphoenolpyruvate: step 3/7. In terms of biological role, involved in the third step of the chorismate pathway, which leads to the biosynthesis of aromatic amino acids. Catalyzes the cis-dehydration of 3-dehydroquinate (DHQ) and introduces the first double bond of the aromatic ring to yield 3-dehydroshikimate. The chain is 3-dehydroquinate dehydratase from Thermoplasma acidophilum (strain ATCC 25905 / DSM 1728 / JCM 9062 / NBRC 15155 / AMRC-C165).